We begin with the raw amino-acid sequence, 244 residues long: Robin (244 aa).

In Acanthamoeba polyphaga (Amoeba), this protein is Robin.